Reading from the N-terminus, the 73-residue chain is UPF0435 protein lmo1707 (73 aa).

Belongs to the UPF0435 family.

The sequence is that of UPF0435 protein lmo1707 from Listeria monocytogenes serovar 1/2a (strain ATCC BAA-679 / EGD-e).